The sequence spans 167 residues: uncharacterized protein (167 aa).

The disordered stretch occupies residues 140 to 167 (SSEEKKKKKKKKKEKSLHTEREKKKKKF). Positions 145–154 (KKKKKKKKEK) are enriched in basic residues.

This is an uncharacterized protein from Saccharomyces cerevisiae (strain ATCC 204508 / S288c) (Baker's yeast).